Here is a 249-residue protein sequence, read N- to C-terminus: Large ribosomal subunit protein uL16m (249 aa).

Belongs to the universal ribosomal protein uL16 family. In terms of assembly, component of the mitochondrial large ribosomal subunit (mt-LSU). Mature N.crassa 74S mitochondrial ribosomes consist of a small (37S) and a large (54S) subunit. The 37S small subunit contains a 16S ribosomal RNA (16S mt-rRNA) and 32 different proteins. The 54S large subunit contains a 23S rRNA (23S mt-rRNA) and 42 different proteins.

It is found in the mitochondrion. In terms of biological role, component of the mitochondrial ribosome (mitoribosome), a dedicated translation machinery responsible for the synthesis of mitochondrial genome-encoded proteins, including at least some of the essential transmembrane subunits of the mitochondrial respiratory chain. The mitoribosomes are attached to the mitochondrial inner membrane and translation products are cotranslationally integrated into the membrane. The sequence is that of Large ribosomal subunit protein uL16m (mrpl16) from Neurospora crassa (strain ATCC 24698 / 74-OR23-1A / CBS 708.71 / DSM 1257 / FGSC 987).